Consider the following 402-residue polypeptide: Acetate kinase (402 aa).

Asn-10 provides a ligand contact to Mg(2+). Residue Lys-17 participates in ATP binding. Arg-89 is a substrate binding site. Catalysis depends on Asp-148, which acts as the Proton donor/acceptor. ATP-binding positions include His-208 to Gly-212, Asp-283 to Arg-285, and Gly-334 to Asn-338. Glu-389 is a binding site for Mg(2+).

It belongs to the acetokinase family. Homodimer. Requires Mg(2+) as cofactor. Mn(2+) serves as cofactor.

The protein localises to the cytoplasm. The enzyme catalyses acetate + ATP = acetyl phosphate + ADP. It functions in the pathway metabolic intermediate biosynthesis; acetyl-CoA biosynthesis; acetyl-CoA from acetate: step 1/2. In terms of biological role, catalyzes the formation of acetyl phosphate from acetate and ATP. Can also catalyze the reverse reaction. The polypeptide is Acetate kinase (Actinobacillus pleuropneumoniae serotype 5b (strain L20)).